The following is a 762-amino-acid chain: Chondroadherin-like protein (762 aa).

Positions 1–30 are cleaved as a signal peptide; that stretch reads MEGPRSSTHVPLVLPLLVLLLLAPARQAAA. The LRRNT 1 domain maps to 31–62; it reads QRCPQACICDNSRRHVACRYQNLTEVPDAIPE. Asparagine 52 carries N-linked (GlcNAc...) asparagine glycosylation. 9 LRR repeats span residues 87-108, 111-132, 135-156, 159-180, 183-204, 207-228, 231-252, 255-276, and 279-300; these read HLTH…AFRG, RLLL…ALDG, SLRR…TFGA, ALAT…AFQG, RVRW…ALAG, ALRR…VLSQ, GLAR…DGLA, GLRE…AFAH, and RLHT…QGPG. An LRRCT 1 domain is found at 310-359; it reads NPLWCGCQARPLLEWLARARVRSDGACQGPRRLRGEALDALRPWDLRCPG. The segment at 364-390 is disordered; the sequence is EEEELEERAVAGPRAPPRGPPRGPGEE. The span at 377–386 shows a compositional bias: pro residues; the sequence is RAPPRGPPRG. The LRRNT 2 domain occupies 387 to 425; it reads PGEERAVAPCPRACVCVPESRHSSCEGCGLQAVPRGFPS. A disulfide bond links cysteine 396 and cysteine 411. LRR repeat units lie at residues 426–447, 450–471, 474–495, 498–519, 522–543, 546–566, 570–591, 594–615, 619–640, and 644–665; these read DTQL…AFPG, HLVS…ALAG, RLIY…ALEG, RLGY…ALRA, SLFS…DLGR, ALRW…GALG, ELEK…ALEG, ALLE…AFQP, SLQH…AFSG, and GLQS…PSLS. An N-linked (GlcNAc...) asparagine glycan is attached at asparagine 626. The 50-residue stretch at 675 to 724 folds into the LRRCT 2 domain; sequence NPFHCDCQLLPLHRWLTGLNLRVGATCATPPNARGQRVKAAAAVFEDCPG. Cystine bridges form between cysteine 679–cysteine 722 and cysteine 681–cysteine 701. The span at 728–745 shows a compositional bias: basic residues; the sequence is RKAKRTPASRPSARRTPI. The interval 728–762 is disordered; that stretch reads RKAKRTPASRPSARRTPIKGRQCGADKVGKEKGRL.

This sequence belongs to the small leucine-rich proteoglycan (SLRP) family. SLRP class IV subfamily. Associates with collagen and binds to collagen fibrils.

It localises to the secreted. The protein localises to the extracellular space. Its subcellular location is the extracellular matrix. Its function is as follows. Potential negative modulator of chondrocyte differentiation. Inhibits collagen fibrillogenesis in vitro. May influence chondrocyte's differentiation by acting on its cellular collagenous microenvironment. The chain is Chondroadherin-like protein (CHADL) from Homo sapiens (Human).